The following is a 146-amino-acid chain: Hemoglobin subunit beta (146 aa).

Ala-1 carries the N-acetylalanine modification. The Globin domain maps to 2 to 146 (SFDPHEKQLI…VAAALAAEYH (145 aa)). Residues His-63 and His-92 each coordinate heme b.

This sequence belongs to the globin family. As to quaternary structure, heterotetramer of two alpha chains and two beta chains. As to expression, red blood cells.

Functionally, involved in oxygen transport from the lung to the various peripheral tissues. This Crocodylus niloticus (Nile crocodile) protein is Hemoglobin subunit beta (HBB).